We begin with the raw amino-acid sequence, 93 residues long: Acylphosphatase (93 aa).

The region spanning 6 to 93 (RAHILVSGEV…GDLGPFSVRH (88 aa)) is the Acylphosphatase-like domain. Active-site residues include arginine 21 and asparagine 39.

This sequence belongs to the acylphosphatase family.

It catalyses the reaction an acyl phosphate + H2O = a carboxylate + phosphate + H(+). The protein is Acylphosphatase (acyP) of Anaeromyxobacter sp. (strain Fw109-5).